The chain runs to 265 residues: Type 1 encapsulin shell protein (265 aa).

FMN-binding positions include 79-81 (RAT), Trp87, and 90-94 (DNLER). The segment at 184-189 (EAGHYP) is pore-forming loop. Position 235 (Glu235) interacts with FMN.

The protein belongs to the encapsulin family. Family 1 subfamily. Homomultimeric. This encapsulin nanocompartment is formed by 60 subunits; monomers form 12 pentamers which assemble to form shells. There are 12 pores where the pentamers meet as well as 3-fold axis channels and dimer channels; none are larger than 3-4 Angstroms in diameter. The N-terminus of the protein is inside the shell, the C-terminus is outside. Probably 3, 4 or 5 Flp cargo decamers bind inside the encapulin nanocompartment. The cofactor is FMN.

The protein localises to the encapsulin nanocompartment. With respect to regulation, proteolysis activated by calcium and cobalt. Its function is as follows. Shell component of a type 1 encapsulin nanocompartment. Assembles into proteinaceous shells 23-24 nm in diameter with 2-2.5 nm thick walls. Cargo protein Flp (ferritin-like protein, probably stores iron) is targeted to the interior via its C-terminal extension; empty intact shells can be isolated in the absence of cargo protein. Fe(2+) may be able to pass though the 5-fold and dimer channels in the protein shell. Functionally, protease that exhibits activity toward chymotrypsin and trypsin substrates. Probably does not have antibacterial activity. In Thermotoga maritima (strain ATCC 43589 / DSM 3109 / JCM 10099 / NBRC 100826 / MSB8), this protein is Type 1 encapsulin shell protein.